We begin with the raw amino-acid sequence, 273 residues long: SPRY domain-containing SOCS box protein 4 (273 aa).

Positions 1-34 (MGQKLSGSLKSVEVREPALRPAKRELRGAEPGRP) are disordered. The span at 12–34 (VEVREPALRPAKRELRGAEPGRP) shows a compositional bias: basic and acidic residues. The region spanning 34-233 (PARLDQLLDM…MRYINGLDPE (200 aa)) is the B30.2/SPRY domain. Residues 234–273 (PLPLMDLCRRSIRSALGRQRLQDISSLPLPQSLKNYLQYQ) enclose the SOCS box domain.

It belongs to the SPSB family. In terms of assembly, component of the probable ECS(SPSB4) E3 ubiquitin-protein ligase complex which contains CUL5, RNF7/RBX2, Elongin BC complex and SPSB4. Interacts with CUL5; RNF7; ELOB and ELOC. Interacts with MET. Interacts (via B30.2/SPRY domain) with PAWR; this interaction occurs in association with the Elongin BC complex. Interacts with NOS2. Interacts with EPHB2.

The protein localises to the cytoplasm. Its subcellular location is the cytosol. It functions in the pathway protein modification; protein ubiquitination. In terms of biological role, substrate recognition component of a SCF-like ECS (Elongin BC-CUL2/5-SOCS-box protein) E3 ubiquitin-protein ligase complex which mediates the ubiquitination and subsequent proteasomal degradation of target proteins. Negatively regulates nitric oxide (NO) production and limits cellular toxicity in activated macrophages by mediating the ubiquitination and proteasomal degradation of NOS2. Acts as a bridge which links NOS2 with the ECS E3 ubiquitin ligase complex components ELOC and CUL5. Diminishes EphB2-dependent cell repulsive responses by mediating the ubiquitination and degradation of EphB2/CTF2. Regulates cellular clock function by mediating the ubiquitin/proteasome-dependent degradation of the circadian transcriptional repressor NR1D1. The polypeptide is SPRY domain-containing SOCS box protein 4 (SPSB4) (Homo sapiens (Human)).